Here is a 240-residue protein sequence, read N- to C-terminus: Phosphatidylserine decarboxylase proenzyme (240 aa).

Residue serine 209 is the Schiff-base intermediate with substrate; via pyruvic acid of the active site. Serine 209 carries the pyruvic acid (Ser); by autocatalysis modification.

The protein belongs to the phosphatidylserine decarboxylase family. PSD-A subfamily. Heterodimer of a large membrane-associated beta subunit and a small pyruvoyl-containing alpha subunit. The cofactor is pyruvate. Is synthesized initially as an inactive proenzyme. Formation of the active enzyme involves a self-maturation process in which the active site pyruvoyl group is generated from an internal serine residue via an autocatalytic post-translational modification. Two non-identical subunits are generated from the proenzyme in this reaction, and the pyruvate is formed at the N-terminus of the alpha chain, which is derived from the carboxyl end of the proenzyme. The post-translation cleavage follows an unusual pathway, termed non-hydrolytic serinolysis, in which the side chain hydroxyl group of the serine supplies its oxygen atom to form the C-terminus of the beta chain, while the remainder of the serine residue undergoes an oxidative deamination to produce ammonia and the pyruvoyl prosthetic group on the alpha chain.

The protein localises to the cell membrane. It carries out the reaction a 1,2-diacyl-sn-glycero-3-phospho-L-serine + H(+) = a 1,2-diacyl-sn-glycero-3-phosphoethanolamine + CO2. It functions in the pathway phospholipid metabolism; phosphatidylethanolamine biosynthesis; phosphatidylethanolamine from CDP-diacylglycerol: step 2/2. In terms of biological role, catalyzes the formation of phosphatidylethanolamine (PtdEtn) from phosphatidylserine (PtdSer). The chain is Phosphatidylserine decarboxylase proenzyme from Mycobacterium avium (strain 104).